The primary structure comprises 119 residues: uncharacterized protein (119 aa).

Positions 6–36 (QAYLDIQGKIAEFRREIKALRVEEKAITANL) form a coiled coil. A disordered region spans residues 95–119 (AVTGSSSNVKIRKSAPARNEEDDDG).

This is an uncharacterized protein from Frog virus 3 (isolate Goorha) (FV-3).